A 476-amino-acid polypeptide reads, in one-letter code: Adenosylhomocysteinase (476 aa).

Residues Thr62, Asp141, and Glu201 each coordinate substrate. Thr202 to Thr204 provides a ligand contact to NAD(+). Substrate-binding residues include Lys231 and Asp235. NAD(+) contacts are provided by residues Asn236, Gly265 to Gly270, Glu288, Asn323, Ile344 to His346, and Asn389.

Belongs to the adenosylhomocysteinase family. Requires NAD(+) as cofactor.

It localises to the cytoplasm. The catalysed reaction is S-adenosyl-L-homocysteine + H2O = L-homocysteine + adenosine. Its pathway is amino-acid biosynthesis; L-homocysteine biosynthesis; L-homocysteine from S-adenosyl-L-homocysteine: step 1/1. Functionally, may play a key role in the regulation of the intracellular concentration of adenosylhomocysteine. This is Adenosylhomocysteinase from Myxococcus xanthus (strain DK1622).